Consider the following 98-residue polypeptide: PsbF-like protein (98 aa).

The next 2 helical transmembrane spans lie at 5 to 25 (VLLVISPIIFAWIFTVFWLGK) and 73 to 93 (TAAVNALGIPTVFFLGAILAM).

It belongs to the PsbE/PsbF family.

It localises to the membrane. Functionally, unknown. Resembles PsbF, one of the subunits of the photosystem II reaction center. However, it encodes asparagine rather than histidine at the site PsbF uses to bind heme. The chain is PsbF-like protein from Prochlorococcus marinus (strain MIT 9312).